Reading from the N-terminus, the 137-residue chain is Peptide methionine sulfoxide reductase MsrB (137 aa).

Positions Ala7–Glu129 constitute a MsrB domain. Cys46, Cys49, Cys95, and Cys98 together coordinate Zn(2+). Catalysis depends on Cys118, which acts as the Nucleophile.

Belongs to the MsrB Met sulfoxide reductase family. Requires Zn(2+) as cofactor.

The catalysed reaction is L-methionyl-[protein] + [thioredoxin]-disulfide + H2O = L-methionyl-(R)-S-oxide-[protein] + [thioredoxin]-dithiol. The chain is Peptide methionine sulfoxide reductase MsrB from Salmonella agona (strain SL483).